We begin with the raw amino-acid sequence, 432 residues long: MADIIVKNAYVMTMDPDEGDLKNGTVVIEDGKITEIGEKTSESADTVIDAKHSVVMPGLVNTHTHAAMTLFRGYADDLQLADWLEGHIWPAEAKLTAEDVYKGSLLACLEMIRSGTTSFADMYFYMDETAKAVEASGLRASLCHGLIELWNEEKGATDLKEGKRFVRAWQGAADGRIKTMYGPHAPNTCSEEFLAKVREEANRDGAGIHIHLLETEAELLAMKERYGKCSVHLLEDIGFLGPDVLAAHCVWLSDGDIEILGKRGVNVSHNVISNMKLASGIAPVYKMLEKGVNVSLGTDGCASNNNLDLFEEMKTAALLHKVNTFSPTALPARQVLQMGTVNGAKALGTETGMLKVGMKADLIVVDMKKAHLTPCFDVPSHLVYSAKGSDVRTTIVNGKVLMDDYKVLALDEQKVMEDAQKAAEELVTRVNA.

Residues histidine 63 and histidine 65 each contribute to the Zn(2+) site. Glutamate 92 and histidine 184 together coordinate substrate. Histidine 211 contributes to the Zn(2+) binding site. Residues glutamate 214 and aspartate 299 each coordinate substrate. Aspartate 299 contributes to the Zn(2+) binding site.

This sequence belongs to the metallo-dependent hydrolases superfamily. MTA/SAH deaminase family. Homotetramer. Requires Zn(2+) as cofactor.

The enzyme catalyses 5'-deoxyadenosine + H2O + H(+) = 5'-deoxyinosine + NH4(+). It catalyses the reaction S-adenosyl-L-homocysteine + H2O + H(+) = S-inosyl-L-homocysteine + NH4(+). It carries out the reaction S-methyl-5'-thioadenosine + H2O + H(+) = S-methyl-5'-thioinosine + NH4(+). The catalysed reaction is adenosine + H2O + H(+) = inosine + NH4(+). It participates in amino-acid biosynthesis; S-adenosyl-L-methionine biosynthesis. Its function is as follows. Catalyzes the deamination of three SAM-derived enzymatic products, namely 5'-deoxyadenosine, S-adenosyl-L-homocysteine, and 5'-methylthioadenosine, to produce the inosine analogs. Can also deaminate adenosine. The preferred substrate for this enzyme is 5'-deoxyadenosine, but all these substrates are efficiently deaminated. Likely functions in a S-adenosyl-L-methionine (SAM) recycling pathway from S-adenosyl-L-homocysteine (SAH) produced from SAM-dependent methylation reactions. May also be involved in the recycling of 5'-deoxyadenosine, whereupon the 5'-deoxyribose moiety of 5'-deoxyinosine is further metabolized to deoxyhexoses used for the biosynthesis of aromatic amino acids in methanogens. In Methanosarcina barkeri (strain Fusaro / DSM 804), this protein is 5'-deoxyadenosine deaminase.